Reading from the N-terminus, the 869-residue chain is Kinesin-like protein KIN-10A (869 aa).

A compositionally biased stretch (polar residues) spans 1–36 (MAPTPSSSRSNQTQYTLIRTPQTKQRLNFHSKTPNP). Residues 1–50 (MAPTPSSSRSNQTQYTLIRTPQTKQRLNFHSKTPNPDGSKDPSPPEHPVE) form a disordered region. The segment covering 38–50 (GSKDPSPPEHPVE) has biased composition (basic and acidic residues). One can recognise a Kinesin motor domain in the interval 48–367 (PVEVIGRIRD…LEYGAKAKCI (320 aa)). Residue 129-136 (GPTGAGKS) coordinates ATP. Residues 393–515 (RIAAMDEFII…EIEVEFRRSN (123 aa)) adopt a coiled-coil conformation.

It belongs to the TRAFAC class myosin-kinesin ATPase superfamily. Kinesin family. KIN-10 subfamily. Binds microtubules.

Its subcellular location is the cytoplasm. The protein resides in the cytoskeleton. The protein localises to the phragmoplast. Probable plus end-directed motor protein that may contribute to the transport of Golgi-derived vesicles in the phragmoplast. This Arabidopsis thaliana (Mouse-ear cress) protein is Kinesin-like protein KIN-10A.